A 150-amino-acid polypeptide reads, in one-letter code: Transcriptional repressor NrdR (150 aa).

The segment at 3-34 (CPFCNFEESKVVDSRATDDNTTIRRRRECLNC) is a zinc-finger region. The ATP-cone domain occupies 49–139 (VLVVKKDLAR…VYRQFKDINT (91 aa)).

Belongs to the NrdR family. The cofactor is Zn(2+).

Its function is as follows. Negatively regulates transcription of bacterial ribonucleotide reductase nrd genes and operons by binding to NrdR-boxes. This is Transcriptional repressor NrdR from Clostridium botulinum (strain Eklund 17B / Type B).